The chain runs to 246 residues: MyoD family inhibitor domain-containing protein (246 aa).

Disordered regions lie at residues 1 to 93 (MSQE…EEET) and 134 to 164 (KIQSSLSVSSDGSKKSKESSAYSQKPSASPE). Over 1 to 170 (MSQEREPFSP…ASPEDGCVHC (170 aa)) the chain is Extracellular. A compositionally biased stretch (polar residues) spans 63 to 87 (EDNSNSQPIKAQPQRLPQPNTSALE). The 173-residue stretch at 74-246 (QPQRLPQPNT…MECCGICFPS (173 aa)) folds into the MDFI domain. Residues 171-188 (ILTCLFCEFLTLCNIVVG) traverse the membrane as a helical segment. Topologically, residues 189 to 246 (QASCGICTSEACCCCCTEEMGDDCNCPCDMDCGIMDACCESSDCLEICMECCGICFPS) are cytoplasmic.

This sequence belongs to the MDFI family. Expressed broadly at a low level in the early embryo.

The protein localises to the cytoplasm. Its subcellular location is the cell membrane. It localises to the secreted. Required to control the activity of various transcription factors through their sequestration in the cytoplasm. Retains nuclear Zic proteins in the cytoplasm and inhibits their transcriptional activation. Required for dorsoanterior development. Necessary for siamois to activate downstream target genes, including gsc, during execution of the dorsal organizer program. Also regulates the transcriptional activity of TCF7L1/TCF3 by interacting directly with TCF7L1/TCF3 and preventing it from binding DNA. Involved in the development of lymphatic vessel valves. It is required to promote lymphatic endothelial cell migration, in a process that involves down-regulation of integrin beta 1 activation and control of cell adhesion to the extracellular matrix. This chain is MyoD family inhibitor domain-containing protein, found in Xenopus laevis (African clawed frog).